A 368-amino-acid chain; its full sequence is Peptide chain release factor 2 (368 aa).

Position 250 is an N5-methylglutamine (Gln250).

The protein belongs to the prokaryotic/mitochondrial release factor family. Methylated by PrmC. Methylation increases the termination efficiency of RF2.

It localises to the cytoplasm. In terms of biological role, peptide chain release factor 2 directs the termination of translation in response to the peptide chain termination codons UGA and UAA. The sequence is that of Peptide chain release factor 2 from Mycolicibacterium smegmatis (strain ATCC 700084 / mc(2)155) (Mycobacterium smegmatis).